Reading from the N-terminus, the 479-residue chain is ATP synthase subunit beta (479 aa).

Residue G153 to T160 coordinates ATP.

This sequence belongs to the ATPase alpha/beta chains family. In terms of assembly, F-type ATPases have 2 components, CF(1) - the catalytic core - and CF(0) - the membrane proton channel. CF(1) has five subunits: alpha(3), beta(3), gamma(1), delta(1), epsilon(1). CF(0) has three main subunits: a(1), b(2) and c(9-12). The alpha and beta chains form an alternating ring which encloses part of the gamma chain. CF(1) is attached to CF(0) by a central stalk formed by the gamma and epsilon chains, while a peripheral stalk is formed by the delta and b chains.

Its subcellular location is the cell membrane. It catalyses the reaction ATP + H2O + 4 H(+)(in) = ADP + phosphate + 5 H(+)(out). In terms of biological role, produces ATP from ADP in the presence of a proton gradient across the membrane. The catalytic sites are hosted primarily by the beta subunits. This is ATP synthase subunit beta from Lactobacillus delbrueckii subsp. bulgaricus (strain ATCC 11842 / DSM 20081 / BCRC 10696 / JCM 1002 / NBRC 13953 / NCIMB 11778 / NCTC 12712 / WDCM 00102 / Lb 14).